Consider the following 352-residue polypeptide: Phenylalanine--tRNA ligase alpha subunit (352 aa).

Glutamate 258 contacts Mg(2+).

It belongs to the class-II aminoacyl-tRNA synthetase family. Phe-tRNA synthetase alpha subunit type 1 subfamily. In terms of assembly, tetramer of two alpha and two beta subunits. The cofactor is Mg(2+).

The protein resides in the cytoplasm. The catalysed reaction is tRNA(Phe) + L-phenylalanine + ATP = L-phenylalanyl-tRNA(Phe) + AMP + diphosphate + H(+). This chain is Phenylalanine--tRNA ligase alpha subunit, found in Staphylococcus aureus (strain Mu3 / ATCC 700698).